Here is a 260-residue protein sequence, read N- to C-terminus: Imidazole glycerol phosphate synthase subunit HisF (260 aa).

Residues Asp11 and Asp130 contribute to the active site.

It belongs to the HisA/HisF family. As to quaternary structure, heterodimer of HisH and HisF.

The protein localises to the cytoplasm. The enzyme catalyses 5-[(5-phospho-1-deoxy-D-ribulos-1-ylimino)methylamino]-1-(5-phospho-beta-D-ribosyl)imidazole-4-carboxamide + L-glutamine = D-erythro-1-(imidazol-4-yl)glycerol 3-phosphate + 5-amino-1-(5-phospho-beta-D-ribosyl)imidazole-4-carboxamide + L-glutamate + H(+). Its pathway is amino-acid biosynthesis; L-histidine biosynthesis; L-histidine from 5-phospho-alpha-D-ribose 1-diphosphate: step 5/9. IGPS catalyzes the conversion of PRFAR and glutamine to IGP, AICAR and glutamate. The HisF subunit catalyzes the cyclization activity that produces IGP and AICAR from PRFAR using the ammonia provided by the HisH subunit. The sequence is that of Imidazole glycerol phosphate synthase subunit HisF from Endomicrobium trichonymphae.